The chain runs to 381 residues: Alkanesulfonate monooxygenase (381 aa).

It belongs to the SsuD family. In terms of assembly, homotetramer.

It catalyses the reaction an alkanesulfonate + FMNH2 + O2 = an aldehyde + FMN + sulfite + H2O + 2 H(+). Its function is as follows. Catalyzes the desulfonation of aliphatic sulfonates. This is Alkanesulfonate monooxygenase from Escherichia coli O6:K15:H31 (strain 536 / UPEC).